A 443-amino-acid polypeptide reads, in one-letter code: MTQMTPPEIVSELDKHIVGQARAKKAVAIALRNRWRRARIDEPLRSEITPKNILMIGPTGVGKTEIARRLARLANAPFIKVEATKFTEVGYVGRDVDTIIRDLVEIAIKDGRERAMRVVRDRALDAAEDRVLDVLLPPARPVGFSEPAQPQDSATRQKFRKKLREGELDDKEVEIEVASAPMQAEIFAPPGMEELTQQIQGMFQNLGNSRKKLRKLPIREALKLLADEEAARLINDEEVKTEALRAVEQNGIVFLDEVDKIAARADAHGADVSRQGVQRDLLPLVEGTTISTKYGMIKTDHILFIASGAFHLSKPSDLIPELQGRFPIRVELESLSVEDFERILTSTDACLTRQYEALLATDGVTLSFTPEGIRRLAEIAYQVNEKTENIGARRLYTVMEKLLEEVSFEAGKVGVDKLTVDAAYVDARLEVLAQREDLARYVL.

ATP is bound by residues valine 18, 60 to 65 (GVGKTE), aspartate 256, glutamate 321, and arginine 393.

Belongs to the ClpX chaperone family. HslU subfamily. In terms of assembly, a double ring-shaped homohexamer of HslV is capped on each side by a ring-shaped HslU homohexamer. The assembly of the HslU/HslV complex is dependent on binding of ATP.

It localises to the cytoplasm. ATPase subunit of a proteasome-like degradation complex; this subunit has chaperone activity. The binding of ATP and its subsequent hydrolysis by HslU are essential for unfolding of protein substrates subsequently hydrolyzed by HslV. HslU recognizes the N-terminal part of its protein substrates and unfolds these before they are guided to HslV for hydrolysis. The chain is ATP-dependent protease ATPase subunit HslU from Azoarcus sp. (strain BH72).